The sequence spans 375 residues: Queuine tRNA-ribosyltransferase (375 aa).

Catalysis depends on Asp94, which acts as the Proton acceptor. Substrate-binding positions include 94–98 (DSGGF), Asp148, Gln191, and Gly218. An RNA binding region spans residues 249–255 (GVGSPDD). The active-site Nucleophile is the Asp268. The tract at residues 273–277 (TRIAR) is RNA binding; important for wobble base 34 recognition. Residues Cys306, Cys308, Cys311, and His337 each contribute to the Zn(2+) site.

The protein belongs to the queuine tRNA-ribosyltransferase family. Homodimer. Within each dimer, one monomer is responsible for RNA recognition and catalysis, while the other monomer binds to the replacement base PreQ1. The cofactor is Zn(2+).

The enzyme catalyses 7-aminomethyl-7-carbaguanine + guanosine(34) in tRNA = 7-aminomethyl-7-carbaguanosine(34) in tRNA + guanine. It functions in the pathway tRNA modification; tRNA-queuosine biosynthesis. In terms of biological role, catalyzes the base-exchange of a guanine (G) residue with the queuine precursor 7-aminomethyl-7-deazaguanine (PreQ1) at position 34 (anticodon wobble position) in tRNAs with GU(N) anticodons (tRNA-Asp, -Asn, -His and -Tyr). Catalysis occurs through a double-displacement mechanism. The nucleophile active site attacks the C1' of nucleotide 34 to detach the guanine base from the RNA, forming a covalent enzyme-RNA intermediate. The proton acceptor active site deprotonates the incoming PreQ1, allowing a nucleophilic attack on the C1' of the ribose to form the product. After dissociation, two additional enzymatic reactions on the tRNA convert PreQ1 to queuine (Q), resulting in the hypermodified nucleoside queuosine (7-(((4,5-cis-dihydroxy-2-cyclopenten-1-yl)amino)methyl)-7-deazaguanosine). The polypeptide is Queuine tRNA-ribosyltransferase (Thermoanaerobacter pseudethanolicus (strain ATCC 33223 / 39E) (Clostridium thermohydrosulfuricum)).